The primary structure comprises 467 residues: MRPQELPRLAFPLLLLLLLLLPPPPCPAHSATRFDPTWESLDARQLPAWFDQAKFGIFIHWGVFSVPSFGSEWFWWYWQKEKIPKYVEFMKDNYPPSFKYEDFGPLFTAKFFNANQWADIFQASGAKYIVLTSKHHEGFTLWGSEYSWNWNAIDEGPKRDIVKELEVAIRNRTDLRFGLYYSLFEWFHPLFLEDESSSFHKRQFPVSKTLPELYELVNNYQPEVLWSDGDGGAPDQYWNSTGFLAWLYNESPVRGTVVTNDRWGAGSICKHGGFYTCSDRYNPGHLLPHKWENCMTIDKLSWGYRREAGISDYLTIEELVKQLVETVSCGGNLLMNIGPTLDGTISVVFEERLRQMGSWLKVNGEAIYETHTWRSQNDTVTPDVWYTSKPKEKLVYAIFLKWPTSGQLFLGHPKAILGATEVKLLGHGQPLNWISLEQNGIMVELPQLTIHQMPCKWGWALALTNVI.

The N-terminal stretch at 1–28 (MRPQELPRLAFPLLLLLLLLLPPPPCPA) is a signal peptide. 2 N-linked (GlcNAc...) asparagine glycosylation sites follow: Asn-171 and Asn-239. At Ser-301 the chain carries Phosphoserine; by FAM20C. Asn-377 carries N-linked (GlcNAc...) asparagine glycosylation.

Belongs to the glycosyl hydrolase 29 family. In terms of assembly, homotetramer.

It localises to the secreted. The catalysed reaction is an alpha-L-fucoside + H2O = L-fucose + an alcohol. Functionally, alpha-L-fucosidase is responsible for hydrolyzing the alpha-1,6-linked fucose joined to the reducing-end N-acetylglucosamine of the carbohydrate moieties of glycoproteins. This chain is Plasma alpha-L-fucosidase (FUCA2), found in Homo sapiens (Human).